The chain runs to 289 residues: Palmitoyl-protein thioesterase 3 (289 aa).

Residues 1-20 form the signal peptide; sequence MRILSSLILLIALAIALVSA. S97 is a catalytic residue. Residues N189 and N195 are each glycosylated (N-linked (GlcNAc...) asparagine). Active-site residues include D210 and H266. N281 carries N-linked (GlcNAc...) asparagine glycosylation.

It belongs to the palmitoyl-protein thioesterase family.

It is found in the lysosome. It catalyses the reaction S-hexadecanoyl-L-cysteinyl-[protein] + H2O = L-cysteinyl-[protein] + hexadecanoate + H(+). Functionally, removes thioester-linked fatty acyl groups such as palmitate from modified cysteine residues in proteins or peptides during lysosomal degradation. The polypeptide is Palmitoyl-protein thioesterase 3 (ppt3) (Dictyostelium discoideum (Social amoeba)).